Consider the following 184-residue polypeptide: Large ribosomal subunit protein uL5c (184 aa).

This sequence belongs to the universal ribosomal protein uL5 family. As to quaternary structure, part of the 50S ribosomal subunit; contacts the 5S rRNA.

It is found in the plastid. It localises to the chloroplast. Functionally, binds 5S rRNA, forms part of the central protuberance of the 50S subunit. The sequence is that of Large ribosomal subunit protein uL5c (rpl5) from Mesostigma viride (Green alga).